The primary structure comprises 279 residues: NLP effector protein 9 (279 aa).

An N-terminal signal peptide occupies residues 1 to 19; it reads MKISNLLGVLVVFLAVVKG. Residues 151-161 carry the Conserved undecapeptide motif motif; sequence AIMYAWYFPDI. N-linked (GlcNAc...) asparagine glycosylation is present at asparagine 176.

It belongs to the Necrosis inducing protein (NPP1) family.

The protein localises to the secreted. Secreted effector that acts as a pathogen-associated molecular pattern (PAMP) recognized by the plant immune system. Seems not to induce necrosis in Nicotiana benthamiana leaves. This Plasmopara viticola (Downy mildew of grapevine) protein is NLP effector protein 9.